Reading from the N-terminus, the 217-residue chain is MERHLMDSQIKGVSTGTTILAVTFNGGVIIGSDSRASIGGSYVSSKTINKLIQVHDRIFCCIAGSLADAQAVTKAAKFQISFHSIQMESPPLVKAAASVLKELCYNNKEELQAGFITAGWDRKKGPQVYTVALGGMLLSQPFTIGGSGSTYIYGYADAKYKPDMSKEECLQFAKNALALAMGRDNVSGGVAHLVVITEEGVEHVVIPGDKLPKFHDE.

Positions 1–16 (MERHLMDSQIKGVSTG) are cleaved as a propeptide — removed in mature form. The active-site Nucleophile is the T17.

It belongs to the peptidase T1B family. In terms of assembly, the 26S proteasome consists of a 20S proteasome core and two 19S regulatory subunits. The 20S proteasome core is composed of 28 subunits that are arranged in four stacked rings, resulting in a barrel-shaped structure. The two end rings are each formed by seven alpha subunits, and the two central rings are each formed by seven beta subunits. The catalytic chamber with the active sites is on the inside of the barrel.

Its subcellular location is the cytoplasm. The protein localises to the nucleus. The enzyme catalyses Cleavage of peptide bonds with very broad specificity.. In terms of biological role, the proteasome is a multicatalytic proteinase complex which is characterized by its ability to cleave peptides with Arg, Phe, Tyr, Leu, and Glu adjacent to the leaving group at neutral or slightly basic pH. The proteasome has an ATP-dependent proteolytic activity. This subunit is involved in antigen processing to generate class I binding peptides. This chain is Proteasome subunit beta type-6-A like protein (psmb6l-a), found in Salmo salar (Atlantic salmon).